An 88-amino-acid chain; its full sequence is Small ribosomal subunit protein bS20 (88 aa).

A compositionally biased stretch (basic residues) spans 1 to 21 (MANSKSAKKRALQSEKRRQHN). Residues 1-26 (MANSKSAKKRALQSEKRRQHNASRSS) are disordered.

The protein belongs to the bacterial ribosomal protein bS20 family.

Binds directly to 16S ribosomal RNA. This is Small ribosomal subunit protein bS20 from Shewanella halifaxensis (strain HAW-EB4).